Reading from the N-terminus, the 95-residue chain is Aspartyl/glutamyl-tRNA(Asn/Gln) amidotransferase subunit C (95 aa).

Belongs to the GatC family. As to quaternary structure, heterotrimer of A, B and C subunits.

The enzyme catalyses L-glutamyl-tRNA(Gln) + L-glutamine + ATP + H2O = L-glutaminyl-tRNA(Gln) + L-glutamate + ADP + phosphate + H(+). It catalyses the reaction L-aspartyl-tRNA(Asn) + L-glutamine + ATP + H2O = L-asparaginyl-tRNA(Asn) + L-glutamate + ADP + phosphate + 2 H(+). In terms of biological role, allows the formation of correctly charged Asn-tRNA(Asn) or Gln-tRNA(Gln) through the transamidation of misacylated Asp-tRNA(Asn) or Glu-tRNA(Gln) in organisms which lack either or both of asparaginyl-tRNA or glutaminyl-tRNA synthetases. The reaction takes place in the presence of glutamine and ATP through an activated phospho-Asp-tRNA(Asn) or phospho-Glu-tRNA(Gln). In Prosthecochloris aestuarii (strain DSM 271 / SK 413), this protein is Aspartyl/glutamyl-tRNA(Asn/Gln) amidotransferase subunit C.